Reading from the N-terminus, the 475-residue chain is Sensor histidine kinase GlrK (475 aa).

At 1–13 the chain is on the cytoplasmic side; the sequence is MKRWPVFPRSLRQ. A helical membrane pass occupies residues 14–34; that stretch reads LVMLAFLLILLPLLVLAWQAW. The Periplasmic segment spans residues 35–173; it reads QSLNALSDQA…LQREIAERGQ (139 aa). A helical membrane pass occupies residues 174 to 194; sequence YFGWQSLVLFLVSLVMVLLFT. At 195 to 475 the chain is on the cytoplasmic side; that stretch reads RMIIGPVKNI…IELPSSKNTK (281 aa). The Histidine kinase domain occupies 256–472; that stretch reads HLSHELKTPL…CFRIELPSSK (217 aa). Residue His259 is modified to Phosphohistidine; by autocatalysis.

In terms of processing, autophosphorylated.

The protein localises to the cell inner membrane. The catalysed reaction is ATP + protein L-histidine = ADP + protein N-phospho-L-histidine.. Functionally, member of the two-component regulatory system GlrR/GlrK that up-regulates transcription of the glmY sRNA when cells enter the stationary growth phase. Activates GlrR by phosphorylation. The chain is Sensor histidine kinase GlrK (glrK) from Escherichia coli (strain K12).